The following is a 966-amino-acid chain: Calsyntenin-2 (966 aa).

The first 20 residues, 1–20 (MLPGRLCLVPLLLALGVGSG), serve as a signal peptide directing secretion. Residues 21-835 (GGSGDGGDSR…SIQRSSVVPS (815 aa)) are Extracellular-facing. 2 Cadherin domains span residues 46 to 162 (IETS…APTF) and 163 to 282 (KEPA…MPLF). Residues N58 and N100 are each glycosylated (N-linked (GlcNAc...) asparagine). N344, N376, N720, and N733 each carry an N-linked (GlcNAc...) asparagine glycan. A helical membrane pass occupies residues 836 to 856 (IATVVIIISVCMLVFVVAMGV). At 857–966 (YRVRIAHQHF…NTAGVINIWK (110 aa)) the chain is on the cytoplasmic side. A disordered region spans residues 890–966 (NPMEKHEGPG…NTAGVINIWK (77 aa)). A compositionally biased stretch (acidic residues) spans 901-916 (GEDETTEVEEEEEAEE). A compositionally biased stretch (polar residues) spans 943–960 (QSGTSSQSPERSTWNTAG).

The protein belongs to the calsyntenin family. In terms of processing, proteolytically processed under normal cellular conditions. A primary zeta-cleavage generates a large extracellular (soluble) N-terminal domain (sAlc) and a short C-terminal transmembrane fragment (CTF1). A secondary cleavage catalyzed by gamma-secretase within the transmembrane domain releases the beta-Alc-gamma chain in the extracellular milieu and produces an intracellular fragment (AlcICD). This processing is strongly suppressed in the tripartite complex formed with APBA2 and APP, which seems to prevent the association with PSEN1. As to expression, restricted to the brain. In the cerebral cortex, found in the somas and neuropil of all layers. Expressed at highest levels in neurons of cortical layers 5 and 6 and, at lower levels, in neurons of the upper layers. Highly expressed in Purkinje cells. Also found in a few scattered interneurons throughout the granule cell layer and occasionally in neurons in the molecular layer (at protein level). Present throughout all cortical layers, highest levels in GABAergic neurons (based on morphology and distribution pattern).

The protein resides in the postsynaptic cell membrane. Its subcellular location is the endoplasmic reticulum membrane. The protein localises to the golgi apparatus membrane. It localises to the cell projection. It is found in the dendrite. In terms of biological role, postsynaptic adhesion molecule that binds to presynaptic neurexins to mediate synapse formation, and which is involved in learning and memory. Promotes synapse development by acting as a cell adhesion molecule at the postsynaptic membrane, which associates with neurexin-alpha at the presynaptic membrane. This Mus musculus (Mouse) protein is Calsyntenin-2.